The chain runs to 468 residues: UDP-N-acetylmuramate--L-alanine ligase (468 aa).

An ATP-binding site is contributed by 114 to 120 (GTHGKTT).

The protein belongs to the MurCDEF family.

It is found in the cytoplasm. The catalysed reaction is UDP-N-acetyl-alpha-D-muramate + L-alanine + ATP = UDP-N-acetyl-alpha-D-muramoyl-L-alanine + ADP + phosphate + H(+). Its pathway is cell wall biogenesis; peptidoglycan biosynthesis. In terms of biological role, cell wall formation. This Methylorubrum extorquens (strain PA1) (Methylobacterium extorquens) protein is UDP-N-acetylmuramate--L-alanine ligase.